A 214-amino-acid polypeptide reads, in one-letter code: Dephospho-CoA kinase (214 aa).

The 200-residue stretch at 3-202 (KIGLTGGIGS…DRWLALAGAA (200 aa)) folds into the DPCK domain. An ATP-binding site is contributed by 11–16 (GSGKSR).

This sequence belongs to the CoaE family.

It localises to the cytoplasm. It catalyses the reaction 3'-dephospho-CoA + ATP = ADP + CoA + H(+). Its pathway is cofactor biosynthesis; coenzyme A biosynthesis; CoA from (R)-pantothenate: step 5/5. Catalyzes the phosphorylation of the 3'-hydroxyl group of dephosphocoenzyme A to form coenzyme A. This chain is Dephospho-CoA kinase, found in Bordetella bronchiseptica (strain ATCC BAA-588 / NCTC 13252 / RB50) (Alcaligenes bronchisepticus).